The chain runs to 329 residues: Serpentine receptor class alpha-2 (329 aa).

A run of 7 helical transmembrane segments spans residues 25-45 (FVYL…VKIL), 57-77 (ILLV…GIEA), 104-124 (YYKI…GLLI), 144-164 (CAVI…LIVW), 188-208 (HYFT…TFIL), 240-260 (FLTV…IVLV), and 273-293 (LLVV…VILV).

This sequence belongs to the nematode receptor-like protein sra family.

Its subcellular location is the membrane. The sequence is that of Serpentine receptor class alpha-2 (sra-2) from Caenorhabditis elegans.